A 309-amino-acid polypeptide reads, in one-letter code: Protein-L-isoaspartate O-methyltransferase 2 (309 aa).

Positions 23-28 (KKRKKK) match the Nuclear localization signal motif. Ser-144 is an active-site residue.

Belongs to the methyltransferase superfamily. L-isoaspartyl/D-aspartyl protein methyltransferase family. In terms of tissue distribution, expressed in rosette leaves, stems, cauline leaves, flowers and developing seeds.

The protein resides in the nucleus. The enzyme catalyses [protein]-L-isoaspartate + S-adenosyl-L-methionine = [protein]-L-isoaspartate alpha-methyl ester + S-adenosyl-L-homocysteine. Its function is as follows. Catalyzes the methyl esterification of L-isoaspartyl residues in peptides and proteins that result from spontaneous decomposition of normal L-aspartyl and L-asparaginyl residues. It plays a role in the repair and/or degradation of damaged proteins. The chain is Protein-L-isoaspartate O-methyltransferase 2 (PIMT2) from Arabidopsis thaliana (Mouse-ear cress).